Consider the following 208-residue polypeptide: MAATSSYTACTKFSMLGWIGGKRELRKRRAFFISAQQQAEVEESQQVNAQEEEQEKMKQQGKQKLPRPVEPQVNVKSKNMSREYGGQWLSSVTRHVRIYAAYIDPVTCEFDQTQMDKLTLILDPTNEFVWTSETCNKVYAYFQELVDHYEGAPLTEYTLRLIGSDIEHYIRKLLYDGEIKYNMNARVLNFSMGKPRILFNDGLPQNVQ.

A chloroplast-targeting transit peptide spans 1-21 (MAATSSYTACTKFSMLGWIGG). A compositionally biased stretch (low complexity) spans 37–49 (QQAEVEESQQVNA). Residues 37–70 (QQAEVEESQQVNAQEEEQEKMKQQGKQKLPRPVE) are disordered.

The protein belongs to the NDH complex subunit M family. Part of the chloroplast NDH complex, composed of a mixture of chloroplast and nucleus encoded subunits. Component of the NDH subcomplex A, at least composed of ndhH, ndhI, ndhJ, ndhK, ndhL, ndhM, ndhN and ndhO.

The protein resides in the plastid. Its subcellular location is the chloroplast thylakoid membrane. The catalysed reaction is a plastoquinone + NADH + (n+1) H(+)(in) = a plastoquinol + NAD(+) + n H(+)(out). The enzyme catalyses a plastoquinone + NADPH + (n+1) H(+)(in) = a plastoquinol + NADP(+) + n H(+)(out). Functionally, NDH shuttles electrons from NAD(P)H:plastoquinone, via FMN and iron-sulfur (Fe-S) centers, to quinones in the photosynthetic chain and possibly in a chloroplast respiratory chain. The immediate electron acceptor for the enzyme in this species is believed to be plastoquinone. Couples the redox reaction to proton translocation, and thus conserves the redox energy in a proton gradient. This is NAD(P)H-quinone oxidoreductase subunit M, chloroplastic from Vitis vinifera (Grape).